The primary structure comprises 429 residues: Enolase (429 aa).

(2R)-2-phosphoglycerate is bound at residue Gln167. Glu209 (proton donor) is an active-site residue. Positions 246, 289, and 316 each coordinate Mg(2+). (2R)-2-phosphoglycerate-binding residues include Lys341, Arg370, Ser371, and Lys392. The active-site Proton acceptor is Lys341.

It belongs to the enolase family. As to quaternary structure, component of the RNA degradosome, a multiprotein complex involved in RNA processing and mRNA degradation. Requires Mg(2+) as cofactor.

The protein localises to the cytoplasm. Its subcellular location is the secreted. The protein resides in the cell surface. The enzyme catalyses (2R)-2-phosphoglycerate = phosphoenolpyruvate + H2O. Its pathway is carbohydrate degradation; glycolysis; pyruvate from D-glyceraldehyde 3-phosphate: step 4/5. Its function is as follows. Catalyzes the reversible conversion of 2-phosphoglycerate (2-PG) into phosphoenolpyruvate (PEP). It is essential for the degradation of carbohydrates via glycolysis. The sequence is that of Enolase from Pseudomonas aeruginosa (strain LESB58).